Here is a 102-residue protein sequence, read N- to C-terminus: Mini zinc finger protein 1 (102 aa).

Residues 1–13 are compositionally biased toward basic residues; it reads MMKKRQMVIKQRS. The disordered stretch occupies residues 1 to 34; that stretch reads MMKKRQMVIKQRSRNSNTSSSWTTTSSSSSSSEI. Positions 14-32 are enriched in low complexity; the sequence is RNSNTSSSWTTTSSSSSSS. The segment at 39–88 adopts a ZF-HD dimerization-type; degenerate zinc-finger fold; that stretch reads YVECQKNHAANIGGYAVDGCREFMAAGVEGTVDALRCAACGCHRNFHRKE.

In terms of assembly, homo- and heterodimers. Interacts with ZHD1, ZHD5, ZHD6, ZHD7, ZHD8, ZHD10 and ZHD13. As to expression, mostly expressed in roots and stems, present in siliques and seedlings, and weakly observed in petioles, leaves and flowers.

The protein resides in the cytoplasm. Functionally, inhibits zinc finger homeodomain (ZHD) transcription factors, such as ZHD5, by interacting with them to prevent both their nuclear localization and their DNA-binding properties. Involved in integrating signals from multiple hormones by preventing the expression of genes involved in gibberellic acid (GA), auxin and brassinosteroid signaling and by promoting the expression of abscisic acid (ABA)-responsive genes. Regulates several development aspects, including photomorphogenesis, apical dominance, longevity, flower morphology and fertility, as well as root and stem elongation. Promotes the formation of ectopic shoot meristems on leaf margins. This Arabidopsis thaliana (Mouse-ear cress) protein is Mini zinc finger protein 1 (MIF1).